Consider the following 138-residue polypeptide: Transcription antitermination protein NusB (138 aa).

This sequence belongs to the NusB family.

Functionally, involved in transcription antitermination. Required for transcription of ribosomal RNA (rRNA) genes. Binds specifically to the boxA antiterminator sequence of the ribosomal RNA (rrn) operons. In Leptospira interrogans serogroup Icterohaemorrhagiae serovar copenhageni (strain Fiocruz L1-130), this protein is Transcription antitermination protein NusB.